The sequence spans 500 residues: Putative DNA recombinase (500 aa).

Residues 1-144 enclose the Resolvase/invertase-type recombinase catalytic domain; that stretch reads MIAIYVRVST…SGRLQKMKKG (144 aa). The O-(5'-phospho-DNA)-serine intermediate role is filled by Ser9. The recombinase DNA-binding region spans 152–288; the sequence is LYGYKFVKEK…QELLGQSKRK (137 aa). Positions 372-448 form a coiled coil; the sequence is KEAEQSNHLS…IQSKMKVLDD (77 aa).

This sequence in the N-terminal section; belongs to the site-specific recombinase resolvase family.

Putative site-specific recombinase having a very important role in sporulation. It probably plays a role in the recombination of SpoIIIC and SpoIVCB to form sigma K factor. The protein is Putative DNA recombinase (cisA) of Bacillus subtilis (strain 168).